We begin with the raw amino-acid sequence, 94 residues long: MDARDIIKRPVVTEESTSILDDKKYTFEVDTRATKTQVKYAVEEIFDVKVAKVNVMNYKGKLKRMGRYAGYTNKRRKAIVTVTADSKEIQFFEV.

The protein belongs to the universal ribosomal protein uL23 family. As to quaternary structure, part of the 50S ribosomal subunit. Contacts protein L29, and trigger factor when it is bound to the ribosome.

Functionally, one of the early assembly proteins it binds 23S rRNA. One of the proteins that surrounds the polypeptide exit tunnel on the outside of the ribosome. Forms the main docking site for trigger factor binding to the ribosome. In Listeria monocytogenes serotype 4b (strain CLIP80459), this protein is Large ribosomal subunit protein uL23.